Reading from the N-terminus, the 391-residue chain is tRNA-specific 2-thiouridylase MnmA (391 aa).

Residues 9–16 (GMSGGVDS) and methionine 35 contribute to the ATP site. Positions 95–97 (NPD) are interaction with target base in tRNA. Cysteine 100 serves as the catalytic Nucleophile. A disulfide bridge connects residues cysteine 100 and cysteine 196. Glycine 124 serves as a coordination point for ATP. The segment at 146 to 148 (KDQ) is interaction with tRNA. Cysteine 196 (cysteine persulfide intermediate) is an active-site residue. Residues 308–309 (RY) are interaction with tRNA. Polar residues predominate over residues 372 to 382 (TGQPGQATSTG). Residues 372–391 (TGQPGQATSTGHAPALAEAR) form a disordered region.

This sequence belongs to the MnmA/TRMU family.

Its subcellular location is the cytoplasm. It catalyses the reaction S-sulfanyl-L-cysteinyl-[protein] + uridine(34) in tRNA + AH2 + ATP = 2-thiouridine(34) in tRNA + L-cysteinyl-[protein] + A + AMP + diphosphate + H(+). Its function is as follows. Catalyzes the 2-thiolation of uridine at the wobble position (U34) of tRNA, leading to the formation of s(2)U34. In Burkholderia cenocepacia (strain ATCC BAA-245 / DSM 16553 / LMG 16656 / NCTC 13227 / J2315 / CF5610) (Burkholderia cepacia (strain J2315)), this protein is tRNA-specific 2-thiouridylase MnmA.